Consider the following 346-residue polypeptide: Biotin synthase (346 aa).

The Radical SAM core domain maps to 38 to 256 (RQVQVSTLLS…IAVARIMMPT (219 aa)). 3 residues coordinate [4Fe-4S] cluster: C53, C57, and C60. Residues C97, C128, C188, and R260 each coordinate [2Fe-2S] cluster.

This sequence belongs to the radical SAM superfamily. Biotin synthase family. As to quaternary structure, homodimer. The cofactor is [4Fe-4S] cluster. It depends on [2Fe-2S] cluster as a cofactor.

It catalyses the reaction (4R,5S)-dethiobiotin + (sulfur carrier)-SH + 2 reduced [2Fe-2S]-[ferredoxin] + 2 S-adenosyl-L-methionine = (sulfur carrier)-H + biotin + 2 5'-deoxyadenosine + 2 L-methionine + 2 oxidized [2Fe-2S]-[ferredoxin]. Its pathway is cofactor biosynthesis; biotin biosynthesis; biotin from 7,8-diaminononanoate: step 2/2. In terms of biological role, catalyzes the conversion of dethiobiotin (DTB) to biotin by the insertion of a sulfur atom into dethiobiotin via a radical-based mechanism. This is Biotin synthase from Escherichia coli O6:K15:H31 (strain 536 / UPEC).